A 616-amino-acid chain; its full sequence is Sodium- and chloride-dependent transporter XTRP3 (616 aa).

The segment covering 1–11 (MRLAIKRRASR) has biased composition (basic residues). Positions 1–26 (MRLAIKRRASRGQRPGPDEKRARDME) are disordered. At 1 to 37 (MRLAIKRRASRGQRPGPDEKRARDMEKARPQWGNPLQ) the chain is on the cytoplasmic side. The span at 16–26 (GPDEKRARDME) shows a compositional bias: basic and acidic residues. The chain crosses the membrane as a helical span at residues 38–58 (FVFACISYAVGLGNVWRFPYL). The Extracellular segment spans residues 59–66 (CQMYGGGS). The chain crosses the membrane as a helical span at residues 67–87 (FLVPYLIMLIVEGMPLLYLEL). Over 88 to 103 (AVGQRMRQGSIGAWRT) the chain is Cytoplasmic. A helical transmembrane segment spans residues 104 to 124 (ISPYLSGVGVASVVVSFFLSM). At 125–189 (YYNVINAWGF…ISPSIQENGG (65 aa)) the chain is on the extracellular side. The N-linked (GlcNAc...) asparagine glycan is linked to Asn155. The chain crosses the membrane as a helical span at residues 190–210 (VQWEPALCLTLAWLMVYLCIL). The Cytoplasmic portion of the chain corresponds to 211–218 (RGTESTGK). The helical transmembrane segment at 219–239 (VVYFTALMPYCVLIIYLVRGL) threads the bilayer. Residues 240-265 (TLHGATNGLMYMFTPKIEQLANPKAW) are Extracellular-facing. The chain crosses the membrane as a helical span at residues 266–286 (INAATQIFFSLGLGFGSLIAF). The Cytoplasmic segment spans residues 287-300 (ASYNEPSNDCQKHA). The helical transmembrane segment at 301 to 321 (VIVSVINSSTSIFASIVTFSI) threads the bilayer. Residues 322–413 (YGFKATFNYE…EAIKNMEVSQ (92 aa)) lie on the Extracellular side of the membrane. Asn381 carries an N-linked (GlcNAc...) asparagine glycan. A helical membrane pass occupies residues 414–434 (LWSVLYFFMLLMLGMGSMLGN). At 435 to 455 (TAAILTPLTDSKVISSYLPKE) the chain is on the cytoplasmic side. Residues 456-476 (AISGLVCLINCAVGMVFTMEA) form a helical membrane-spanning segment. Residues 477–489 (GNYWFDIFNDYAA) lie on the Extracellular side of the membrane. The chain crosses the membrane as a helical span at residues 490-510 (TLSLLLIVLVETIAVCYVYGL). At 511 to 533 (RRFESDLRAMTGRPLNWYWKAMW) the chain is on the cytoplasmic side. Residues 534–554 (AFVSPLLIIGLFIFYLSDYIL) form a helical membrane-spanning segment. Residues 555-578 (TGTLQYQAWDATQGQLVTKDYPPH) are Extracellular-facing. The chain crosses the membrane as a helical span at residues 579-599 (ALAVIGLLVASSTMCIPLVAL). The Cytoplasmic segment spans residues 600-616 (GTFIRNRLKRGGSSPVA).

It belongs to the sodium:neurotransmitter symporter (SNF) (TC 2.A.22) family. SLC6A20 subfamily. In terms of tissue distribution, highly expressed in epithelial cells of duodenum, jejunum, ileum, stomach, cecum, colon and kidney proximal tubule. Also expressed in the choroid plexus, microglia and meniges of the brain and in the ovary.

Its subcellular location is the apical cell membrane. It catalyses the reaction L-proline(out) + chloride(out) + 2 Na(+)(out) = L-proline(in) + chloride(in) + 2 Na(+)(in). It carries out the reaction 4-hydroxy-L-proline(out) + chloride(out) + 2 Na(+)(out) = 4-hydroxy-L-proline(in) + chloride(in) + 2 Na(+)(in). The catalysed reaction is 2-methyl-2-(methylamino)propanoate(out) + chloride(out) + 2 Na(+)(out) = 2-methyl-2-(methylamino)propanoate(in) + chloride(in) + 2 Na(+)(in). The enzyme catalyses L-pipecolate(out) + chloride(out) + 2 Na(+)(out) = L-pipecolate(in) + chloride(in) + 2 Na(+)(in). It catalyses the reaction glycine betaine(out) + chloride(out) + 2 Na(+)(out) = glycine betaine(in) + chloride(in) + 2 Na(+)(in). It carries out the reaction glycine(out) + chloride(out) + 2 Na(+)(out) = glycine(in) + chloride(in) + 2 Na(+)(in). Mediates the Na(+)- and Cl(-)-dependent uptake of imino acids such as L-proline, N-methyl-L-proline and pipecolate as well as N-methylated amino acids. Also transports glycine, regulates proline and glycine homeostasis in the brain playing a role in the modulation of NMDAR currents. The chain is Sodium- and chloride-dependent transporter XTRP3 from Rattus norvegicus (Rat).